A 949-amino-acid polypeptide reads, in one-letter code: MTELPKAYEAKKIDEKWYQFWDAKRYFTANPLSNKPTYCIVIPPPNVTGVLHMGHALVNTVQDILIRWKRMLGFETLWVPGTDHAGIATQMVVERHLIKTEGKKRTDYTREEFLKHVWTWKEKSENRIIEQLKRLGNSCDWTRLRFTMDENNSLAVRTMFKKLFDDGLIYRGDYLVNWDPHTQTALADDEVEYEDKQSFLWYFKYPLRDESEFISIATTRPETMLGDTAVAVSPNDERFKHLIGKEIRLPLMNRLIPIIADHHVDPSFGTGVVKITPAHDPNDYQIGLSHRLPFINIMTPDGKINENGGHFQGLSMTEARHAVVSEMKEKGLLEKVEPHLNRVGISYRSKAIIEPYLSKQWFVKMDGFSKKLREVVQNGQVKLIPSHWESTYFHWIDNLRDWCISRQLWWGHRIPIWYHKEDSNRLICYAGSDLPDEVKNAPEEWIQDSDVLDTWFSSALWPFSTLGWPEQTSELAKFYPTSVLVTGHDILFFWVARMILMGDYALDQPPFPETYLLGLIYGKSYWRQESNGGILYVNEQERSDFDMGKPIPKEVFSKWEKMSKSKGNIIDPLEMIDQFGTDAVRMALCASATQARQIDLDRRRFEEFKNFTNKIWNGARFVLMNLDGNEQNRTMSLTSQGFSQGLDEALFTLEDRWILSVLNRTVESVNVHLNHYQFDQAAIEAYDFFWKEFCAYYVEIAKPILFGKIGTAQERTNKQKLLVIVLCQAIRLIHPMAPFITEELFHILKERLEGVEALTNADPYTKECIQALQSSACLVAPYPVRIGEKNQKVEAVFALMEQIVYTIRNIRGEMKLSPGTATDVYIIGQADDPEWQSAREHITMISALVKTRRILVETEEPKIGFACTGVYHALKIQLPLPEELLKQEKTRLNKEQEKLEISLEKLKNQLSNTDFVRRAPAHLTEKQNQQLSQTEQELREIKEKLMTLP.

The 'HIGH' region motif lies at 45–55 (PNVTGVLHMGH). The 'KMSKS' region motif lies at 561–565 (KMSKS). ATP is bound at residue Lys564. Residues 882 to 949 (EELLKQEKTR…EIKEKLMTLP (68 aa)) adopt a coiled-coil conformation.

This sequence belongs to the class-I aminoacyl-tRNA synthetase family. ValS type 1 subfamily. As to quaternary structure, monomer.

The protein localises to the cytoplasm. The enzyme catalyses tRNA(Val) + L-valine + ATP = L-valyl-tRNA(Val) + AMP + diphosphate. Catalyzes the attachment of valine to tRNA(Val). As ValRS can inadvertently accommodate and process structurally similar amino acids such as threonine, to avoid such errors, it has a 'posttransfer' editing activity that hydrolyzes mischarged Thr-tRNA(Val) in a tRNA-dependent manner. This Protochlamydia amoebophila (strain UWE25) protein is Valine--tRNA ligase.